A 117-amino-acid polypeptide reads, in one-letter code: uncharacterized protein (117 aa).

An N-terminal signal peptide occupies residues Met1–Ala18. Residue Asn86 is glycosylated (N-linked (GlcNAc...) asparagine).

This is an uncharacterized protein from Schizosaccharomyces pombe (strain 972 / ATCC 24843) (Fission yeast).